Here is a 654-residue protein sequence, read N- to C-terminus: Pyoverdine export ATP-binding/permease protein PvdT (654 aa).

Positions 6 to 245 (IELCDIRKAY…AHKGIQAEEL (240 aa)) constitute an ABC transporter domain. 43-50 (GASGSGKS) contacts ATP. The next 4 membrane-spanning stretches (helical) occupy residues 282-302 (ALTL…LAVG), 529-549 (LSLM…IGVM), 584-604 (AIML…VVGA), and 614-634 (AFAL…GVVF).

This sequence belongs to the ABC transporter superfamily. Macrolide exporter (TC 3.A.1.122) family. In terms of assembly, part of the tripartite efflux system PvdRT-OpmQ, which is composed of an inner membrane component with both ATPase and permease domains, PvdT, a periplasmic membrane fusion protein, PvdR, and an outer membrane component, OpmQ.

It is found in the cell inner membrane. Its activity is regulated as follows. Has a basal ATPase activity that is stimulated by PvdR. In vitro, interaction with PVD influences the affinity of PvdT to PvdR. Its function is as follows. Part of the tripartite efflux system PvdRT-OpmQ required for the secretion into the extracellular milieu of the siderophore pyoverdine (PVD), which is involved in iron acquisition. This subunit binds PVD and drives its secretion by hydrolyzing ATP. The system is responsible for export of newly synthesized PVD after the final steps of biosynthesis have taken place in the periplasm. It is also responsible for recycling of PVD after internalization of ferri-PVD into the periplasm by the outer-membrane receptor FpvA and release of iron from PVD, thus making PVD available for new cycles of iron uptake. Contributes to resistance against ampicillin. The polypeptide is Pyoverdine export ATP-binding/permease protein PvdT (Pseudomonas putida (strain ATCC 47054 / DSM 6125 / CFBP 8728 / NCIMB 11950 / KT2440)).